The chain runs to 196 residues: Adenylate kinase (196 aa).

ATP is bound at residue 9 to 17 (GIPGVGKST).

It belongs to the archaeal adenylate kinase family.

The protein resides in the cytoplasm. The catalysed reaction is AMP + ATP = 2 ADP. This Pyrococcus abyssi (strain GE5 / Orsay) protein is Adenylate kinase (adkA).